Consider the following 723-residue polypeptide: Capsid protein (723 aa).

The interval 658–679 (QATPPPFKKPRTEDQEENPEET) is disordered.

Belongs to the anelloviridae capsid protein family.

The protein resides in the virion. Functionally, self assemble to form an icosahedral capsid. This Torque teno virus (isolate Japanese macaque/Japan/Mf-TTV9/2000) (TTV) protein is Capsid protein.